Here is a 454-residue protein sequence, read N- to C-terminus: Bifunctional protein GlmU (454 aa).

The pyrophosphorylase stretch occupies residues 1–231 (MDRATVSLIV…EAETLGVNTR (231 aa)). Residues 11–14 (LAAG), lysine 25, glutamine 78, 83–84 (GT), 106–108 (YGD), glycine 143, glutamate 157, asparagine 172, and asparagine 229 each bind UDP-N-acetyl-alpha-D-glucosamine. Aspartate 108 lines the Mg(2+) pocket. Asparagine 229 contacts Mg(2+). The segment at 232–252 (AQLAEAEAEFQKRARAAALED) is linker. Positions 253–454 (GVTLTAPDTV…AKAAKKKEAP (202 aa)) are N-acetyltransferase. UDP-N-acetyl-alpha-D-glucosamine-binding residues include arginine 318 and lysine 336. Histidine 348 acts as the Proton acceptor in catalysis. 2 residues coordinate UDP-N-acetyl-alpha-D-glucosamine: tyrosine 351 and asparagine 362. Acetyl-CoA contacts are provided by residues alanine 365, 371-372 (NY), serine 390, serine 408, and arginine 425.

In the N-terminal section; belongs to the N-acetylglucosamine-1-phosphate uridyltransferase family. This sequence in the C-terminal section; belongs to the transferase hexapeptide repeat family. In terms of assembly, homotrimer. Mg(2+) serves as cofactor.

The protein resides in the cytoplasm. The enzyme catalyses alpha-D-glucosamine 1-phosphate + acetyl-CoA = N-acetyl-alpha-D-glucosamine 1-phosphate + CoA + H(+). The catalysed reaction is N-acetyl-alpha-D-glucosamine 1-phosphate + UTP + H(+) = UDP-N-acetyl-alpha-D-glucosamine + diphosphate. It functions in the pathway nucleotide-sugar biosynthesis; UDP-N-acetyl-alpha-D-glucosamine biosynthesis; N-acetyl-alpha-D-glucosamine 1-phosphate from alpha-D-glucosamine 6-phosphate (route II): step 2/2. Its pathway is nucleotide-sugar biosynthesis; UDP-N-acetyl-alpha-D-glucosamine biosynthesis; UDP-N-acetyl-alpha-D-glucosamine from N-acetyl-alpha-D-glucosamine 1-phosphate: step 1/1. It participates in bacterial outer membrane biogenesis; LPS lipid A biosynthesis. Functionally, catalyzes the last two sequential reactions in the de novo biosynthetic pathway for UDP-N-acetylglucosamine (UDP-GlcNAc). The C-terminal domain catalyzes the transfer of acetyl group from acetyl coenzyme A to glucosamine-1-phosphate (GlcN-1-P) to produce N-acetylglucosamine-1-phosphate (GlcNAc-1-P), which is converted into UDP-GlcNAc by the transfer of uridine 5-monophosphate (from uridine 5-triphosphate), a reaction catalyzed by the N-terminal domain. This Cereibacter sphaeroides (strain ATCC 17023 / DSM 158 / JCM 6121 / CCUG 31486 / LMG 2827 / NBRC 12203 / NCIMB 8253 / ATH 2.4.1.) (Rhodobacter sphaeroides) protein is Bifunctional protein GlmU.